A 68-amino-acid polypeptide reads, in one-letter code: DNA-directed RNA polymerase subunit omega (68 aa).

It belongs to the RNA polymerase subunit omega family. The RNAP catalytic core consists of 2 alpha, 1 beta, 1 beta' and 1 omega subunit. When a sigma factor is associated with the core the holoenzyme is formed, which can initiate transcription.

It catalyses the reaction RNA(n) + a ribonucleoside 5'-triphosphate = RNA(n+1) + diphosphate. In terms of biological role, promotes RNA polymerase assembly. Latches the N- and C-terminal regions of the beta' subunit thereby facilitating its interaction with the beta and alpha subunits. This Sulfurovum sp. (strain NBC37-1) protein is DNA-directed RNA polymerase subunit omega.